We begin with the raw amino-acid sequence, 274 residues long: Mitochondrial S-adenosylmethionine carrier protein (274 aa).

Solcar repeat units follow at residues P4 to L77, F86 to L168, and V177 to L265. 6 helical membrane passes run G5–F25, I49–L69, H85–I105, R142–W162, S182–V202, and F238–A258.

The protein belongs to the mitochondrial carrier (TC 2.A.29) family.

Its subcellular location is the mitochondrion inner membrane. It carries out the reaction S-adenosyl-L-homocysteine(out) + S-adenosyl-L-methionine(in) = S-adenosyl-L-homocysteine(in) + S-adenosyl-L-methionine(out). In terms of biological role, mitochondrial S-adenosyl-L-methionine/S-adenosyl-L-homocysteine antiporter. Mediates the exchange of cytosolic S-adenosyl-L-methionine, the predominant methyl-group donor for macromolecule methylation processes, for mitochondrial S-adenosylhomocysteine(SAH), a by-product of methylation reactions. The sequence is that of Mitochondrial S-adenosylmethionine carrier protein from Mus musculus (Mouse).